The sequence spans 96 residues: Putative pterin-4-alpha-carbinolamine dehydratase (96 aa).

This sequence belongs to the pterin-4-alpha-carbinolamine dehydratase family.

The enzyme catalyses (4aS,6R)-4a-hydroxy-L-erythro-5,6,7,8-tetrahydrobiopterin = (6R)-L-erythro-6,7-dihydrobiopterin + H2O. The chain is Putative pterin-4-alpha-carbinolamine dehydratase from Novosphingobium aromaticivorans (strain ATCC 700278 / DSM 12444 / CCUG 56034 / CIP 105152 / NBRC 16084 / F199).